The chain runs to 312 residues: tRNA dimethylallyltransferase (312 aa).

10–17 (GPTASGKS) contributes to the ATP binding site. Position 12-17 (12-17 (TASGKS)) interacts with substrate. Positions 35 to 38 (DSKQ) are interaction with substrate tRNA.

This sequence belongs to the IPP transferase family. As to quaternary structure, monomer. Mg(2+) serves as cofactor.

It carries out the reaction adenosine(37) in tRNA + dimethylallyl diphosphate = N(6)-dimethylallyladenosine(37) in tRNA + diphosphate. Functionally, catalyzes the transfer of a dimethylallyl group onto the adenine at position 37 in tRNAs that read codons beginning with uridine, leading to the formation of N6-(dimethylallyl)adenosine (i(6)A). This chain is tRNA dimethylallyltransferase, found in Anaplasma phagocytophilum (strain HZ).